The sequence spans 153 residues: Superoxide dismutase [Cu-Zn] (153 aa).

Residues His-46, His-48, and His-63 each contribute to the Cu cation site. Residues Cys-57 and Cys-146 are joined by a disulfide bond. 4 residues coordinate Zn(2+): His-63, His-71, His-80, and Asp-83. His-120 lines the Cu cation pocket.

Belongs to the Cu-Zn superoxide dismutase family. Homodimer. Cu cation serves as cofactor. The cofactor is Zn(2+).

The protein resides in the cytoplasm. It carries out the reaction 2 superoxide + 2 H(+) = H2O2 + O2. Its function is as follows. Destroys radicals which are normally produced within the cells and which are toxic to biological systems. The chain is Superoxide dismutase [Cu-Zn] (SODCC) from Solidago canadensis var. scabra (Tall goldenrod).